A 324-amino-acid polypeptide reads, in one-letter code: Glyceraldehyde-3-phosphate dehydrogenase 1 (324 aa).

NAD(+)-binding positions include 13 to 14, D35, and K85; that span reads RI. D-glyceraldehyde 3-phosphate is bound by residues 157 to 159, T188, 217 to 218, and R240; these read SCT and TG. The active-site Nucleophile is C158. Position 322 (N322) interacts with NAD(+).

This sequence belongs to the glyceraldehyde-3-phosphate dehydrogenase family. In terms of assembly, homotetramer.

Its subcellular location is the cytoplasm. It carries out the reaction D-glyceraldehyde 3-phosphate + phosphate + NAD(+) = (2R)-3-phospho-glyceroyl phosphate + NADH + H(+). The protein operates within carbohydrate degradation; glycolysis; pyruvate from D-glyceraldehyde 3-phosphate: step 1/5. In Globodera rostochiensis (Golden nematode worm), this protein is Glyceraldehyde-3-phosphate dehydrogenase 1 (GPD-1).